A 231-amino-acid polypeptide reads, in one-letter code: Protein HHL1, chloroplastic (231 aa).

The transit peptide at Met-1 to Arg-39 directs the protein to the chloroplast. The chain crosses the membrane as a helical span at residues Tyr-93–Ala-113. Positions Ser-206–Ala-231 are disordered. Over residues Ser-217 to Ala-231 the composition is skewed to basic and acidic residues.

Interacts with psbB, psbC and LQY1, but not with psbA or psbD.

The protein localises to the plastid. It localises to the chloroplast thylakoid membrane. Its function is as follows. Involved in photoprotection. Forms a complex with LQY1 that is involved in the repair and reassembly cycle of the PSII-LHCII supercomplex under high-light conditions. May function in guiding the release of psbC from PSII core monomers. The chain is Protein HHL1, chloroplastic from Arabidopsis thaliana (Mouse-ear cress).